A 376-amino-acid chain; its full sequence is MKNQKTVVVGMSGGVDSSVSALLMKEQGYNVIGLFMKNWEEKDENGVCSSAQDYDDVRRVCDHINIPYYAVNFVENYRKQVFTQFIADFQKGWTPNPDILCNREIKFKVFLEKALELGADFLATGHYCQNLILDKGSPSLVKGIDHNKDQTYFLYTLNQQILQQVLFPVGGLEKSQVRDIARKHQLVTAEKKDSTGICFIGERDFRSFLSQYVAIQPGAFQTLQGKNVGKHMGTAYYTLGQRKGLGIGGAGEAWFVVGKDHERGIVFVEQGANHPALYCDELIATDLSWVAEAPLLPYTCQSKVRYRQNDQFCTIHRIENGKAFVTFDRPQRAVTPGQSIVFYVGNICLGGGVIQQPGPTYYDQKKSLPHQSPRND.

ATP contacts are provided by residues 10-17 (GMSGGVDS) and M36. Residues 96–98 (NPD) form an interaction with target base in tRNA region. The Nucleophile role is filled by C101. C101 and C198 are oxidised to a cystine. G125 is a binding site for ATP. The tract at residues 148 to 150 (KDQ) is interaction with tRNA. C198 serves as the catalytic Cysteine persulfide intermediate. The interaction with tRNA stretch occupies residues 305–306 (RY).

This sequence belongs to the MnmA/TRMU family.

It is found in the cytoplasm. The enzyme catalyses S-sulfanyl-L-cysteinyl-[protein] + uridine(34) in tRNA + AH2 + ATP = 2-thiouridine(34) in tRNA + L-cysteinyl-[protein] + A + AMP + diphosphate + H(+). Functionally, catalyzes the 2-thiolation of uridine at the wobble position (U34) of tRNA, leading to the formation of s(2)U34. This is tRNA-specific 2-thiouridylase MnmA from Protochlamydia amoebophila (strain UWE25).